A 414-amino-acid polypeptide reads, in one-letter code: Serine hydroxymethyltransferase (414 aa).

(6S)-5,6,7,8-tetrahydrofolate is bound by residues Leu117 and 121-123 (GHL). Residue Lys226 is modified to N6-(pyridoxal phosphate)lysine.

It belongs to the SHMT family. Homodimer. Pyridoxal 5'-phosphate serves as cofactor.

Its subcellular location is the cytoplasm. The enzyme catalyses (6R)-5,10-methylene-5,6,7,8-tetrahydrofolate + glycine + H2O = (6S)-5,6,7,8-tetrahydrofolate + L-serine. It participates in one-carbon metabolism; tetrahydrofolate interconversion. Its pathway is amino-acid biosynthesis; glycine biosynthesis; glycine from L-serine: step 1/1. Its function is as follows. Catalyzes the reversible interconversion of serine and glycine with tetrahydrofolate (THF) serving as the one-carbon carrier. This reaction serves as the major source of one-carbon groups required for the biosynthesis of purines, thymidylate, methionine, and other important biomolecules. Also exhibits THF-independent aldolase activity toward beta-hydroxyamino acids, producing glycine and aldehydes, via a retro-aldol mechanism. The polypeptide is Serine hydroxymethyltransferase (Dictyoglomus thermophilum (strain ATCC 35947 / DSM 3960 / H-6-12)).